Consider the following 95-residue polypeptide: MLKFNEYFTGKVKSIGFDSDSIGQASVGVMEKGEYTFSTAKPEEMTVITGSLKVLIPGSSGWEVFNPGETFYVPANSEFNLQVAEASSYLCKYLS.

It belongs to the nucleoside phosphorylase PpnP family.

It carries out the reaction a purine D-ribonucleoside + phosphate = a purine nucleobase + alpha-D-ribose 1-phosphate. The catalysed reaction is adenosine + phosphate = alpha-D-ribose 1-phosphate + adenine. It catalyses the reaction cytidine + phosphate = cytosine + alpha-D-ribose 1-phosphate. The enzyme catalyses guanosine + phosphate = alpha-D-ribose 1-phosphate + guanine. It carries out the reaction inosine + phosphate = alpha-D-ribose 1-phosphate + hypoxanthine. The catalysed reaction is thymidine + phosphate = 2-deoxy-alpha-D-ribose 1-phosphate + thymine. It catalyses the reaction uridine + phosphate = alpha-D-ribose 1-phosphate + uracil. The enzyme catalyses xanthosine + phosphate = alpha-D-ribose 1-phosphate + xanthine. In terms of biological role, catalyzes the phosphorolysis of diverse nucleosides, yielding D-ribose 1-phosphate and the respective free bases. Can use uridine, adenosine, guanosine, cytidine, thymidine, inosine and xanthosine as substrates. Also catalyzes the reverse reactions. The sequence is that of Pyrimidine/purine nucleoside phosphorylase from Yersinia enterocolitica serotype O:8 / biotype 1B (strain NCTC 13174 / 8081).